Reading from the N-terminus, the 232-residue chain is 26S proteasome non-ATPase regulatory subunit 10 (232 aa).

ANK repeat units follow at residues 45 to 75 (DERT…SPNT), 79 to 108 (GGWT…DPNT), 112 to 141 (SKRT…KNRK), 144 to 173 (TGSA…NINS), 177 to 206 (EGDT…DTTI), and 210 to 232 (DSKT…EFKK).

Acts as a chaperone during the assembly of the 26S proteasome, specifically of the 19S regulatory complex (RC). This is 26S proteasome non-ATPase regulatory subunit 10 (psmD10) from Dictyostelium discoideum (Social amoeba).